Reading from the N-terminus, the 95-residue chain is Aspartyl/glutamyl-tRNA(Asn/Gln) amidotransferase subunit C (95 aa).

It belongs to the GatC family. Heterotrimer of A, B and C subunits.

It carries out the reaction L-glutamyl-tRNA(Gln) + L-glutamine + ATP + H2O = L-glutaminyl-tRNA(Gln) + L-glutamate + ADP + phosphate + H(+). The catalysed reaction is L-aspartyl-tRNA(Asn) + L-glutamine + ATP + H2O = L-asparaginyl-tRNA(Asn) + L-glutamate + ADP + phosphate + 2 H(+). Allows the formation of correctly charged Asn-tRNA(Asn) or Gln-tRNA(Gln) through the transamidation of misacylated Asp-tRNA(Asn) or Glu-tRNA(Gln) in organisms which lack either or both of asparaginyl-tRNA or glutaminyl-tRNA synthetases. The reaction takes place in the presence of glutamine and ATP through an activated phospho-Asp-tRNA(Asn) or phospho-Glu-tRNA(Gln). The protein is Aspartyl/glutamyl-tRNA(Asn/Gln) amidotransferase subunit C of Prosthecochloris aestuarii (strain DSM 271 / SK 413).